The chain runs to 551 residues: Solute carrier family 22 member 3 (551 aa).

A helical transmembrane segment spans residues Val21–Phe41. Asn72, Asn99, and Asn114 each carry an N-linked (GlcNAc...) asparagine glycan. Residues Leu177–Ala197 form a helical membrane-spanning segment. The N-linked (GlcNAc...) asparagine glycan is linked to Asn199. 2 helical membrane-spanning segments follow: residues Ile236–Ala256 and Gly264–Pro284. Positions Pro284–Arg288 match the Proline-rich sequence motif. N-linked (GlcNAc...) asparagine glycosylation occurs at Asn317. A run of 3 helical transmembrane segments spans residues Ile376 to Ile396, Gly464 to Phe484, and Leu493 to Pro513.

It belongs to the major facilitator (TC 2.A.1) superfamily. Organic cation transporter (TC 2.A.1.19) family. Highly expressed in placenta. Highly expressed in kidney cortex. In kidney, expressed specifically in the proximal and distal convoluted tubules and within Bowman capsule. Expressed in brain, particularly in dopaminergic neurons of the substantia nigra compacta, non-aminergic neurons of the ventral tegmental area, substantia nigra reticulata, locus coeruleus, hippocampus and cortex. In brain, also detected in astrocytes in the substantia nigra reticulata, several hypothalamic nuclei and nigrostriatal region. Expressed in neurons and glial cells of amygdala.

It localises to the cell membrane. The protein localises to the apical cell membrane. The protein resides in the basolateral cell membrane. Its subcellular location is the mitochondrion membrane. It is found in the endomembrane system. It localises to the nucleus membrane. The protein localises to the nucleus outer membrane. It carries out the reaction (R)-noradrenaline(out) = (R)-noradrenaline(in). The catalysed reaction is (R)-adrenaline(out) = (R)-adrenaline(in). The enzyme catalyses serotonin(out) = serotonin(in). It catalyses the reaction dopamine(out) = dopamine(in). It carries out the reaction histamine(out) = histamine(in). The catalysed reaction is tyramine(in) = tyramine(out). The enzyme catalyses guanidine(out) = guanidine(in). It catalyses the reaction agmatine(out) = agmatine(in). It carries out the reaction spermidine(in) = spermidine(out). The catalysed reaction is L-histidyl-L-proline diketopiperazine(in) = L-histidyl-L-proline diketopiperazine(out). The enzyme catalyses (R)-salsolinol(in) = (R)-salsolinol(out). Electrogenic voltage-dependent transporter that mediates the transport of a variety of organic cations such as endogenous bioactive amines, cationic drugs and xenobiotics. Cation cellular uptake or release is driven by the electrochemical potential, i.e. membrane potential and concentration gradient. Functions as a Na(+)- and Cl(-)-independent, bidirectional uniporter. Implicated in monoamine neurotransmitters uptake such as dopamine, adrenaline/epinephrine, noradrenaline/norepinephrine, homovanillic acid, histamine, serotonin and tyramine, thereby supporting a role in homeostatic regulation of aminergic neurotransmission in the brain. Transports dopaminergic neuromodulators cyclo(his-pro) and salsolinol with low efficiency. May be involved in the uptake and disposition of cationic compounds by renal clearance from the blood flow. May contribute to regulate the transport of cationic compounds in testis across the blood-testis-barrier. Mediates the transport of polyamine spermidine and putrescine. Mediates the bidirectional transport of polyamine agmatine. Also transports guanidine. May also mediate intracellular transport of organic cations, thereby playing a role in amine metabolism and intracellular signaling. This is Solute carrier family 22 member 3 from Mus musculus (Mouse).